A 475-amino-acid polypeptide reads, in one-letter code: Aspartyl/glutamyl-tRNA(Asn/Gln) amidotransferase subunit B (475 aa).

It belongs to the GatB/GatE family. GatB subfamily. As to quaternary structure, heterotrimer of A, B and C subunits.

It catalyses the reaction L-glutamyl-tRNA(Gln) + L-glutamine + ATP + H2O = L-glutaminyl-tRNA(Gln) + L-glutamate + ADP + phosphate + H(+). The catalysed reaction is L-aspartyl-tRNA(Asn) + L-glutamine + ATP + H2O = L-asparaginyl-tRNA(Asn) + L-glutamate + ADP + phosphate + 2 H(+). Its function is as follows. Allows the formation of correctly charged Asn-tRNA(Asn) or Gln-tRNA(Gln) through the transamidation of misacylated Asp-tRNA(Asn) or Glu-tRNA(Gln) in organisms which lack either or both of asparaginyl-tRNA or glutaminyl-tRNA synthetases. The reaction takes place in the presence of glutamine and ATP through an activated phospho-Asp-tRNA(Asn) or phospho-Glu-tRNA(Gln). The protein is Aspartyl/glutamyl-tRNA(Asn/Gln) amidotransferase subunit B of Pelodictyon phaeoclathratiforme (strain DSM 5477 / BU-1).